The following is a 350-amino-acid chain: Cobalt-precorrin-5B C(1)-methyltransferase (350 aa).

The protein belongs to the CbiD family.

It carries out the reaction Co-precorrin-5B + S-adenosyl-L-methionine = Co-precorrin-6A + S-adenosyl-L-homocysteine. It participates in cofactor biosynthesis; adenosylcobalamin biosynthesis; cob(II)yrinate a,c-diamide from sirohydrochlorin (anaerobic route): step 6/10. In terms of biological role, catalyzes the methylation of C-1 in cobalt-precorrin-5B to form cobalt-precorrin-6A. In Sulfurisphaera tokodaii (strain DSM 16993 / JCM 10545 / NBRC 100140 / 7) (Sulfolobus tokodaii), this protein is Cobalt-precorrin-5B C(1)-methyltransferase.